A 104-amino-acid polypeptide reads, in one-letter code: UPF0045 protein YqgV (104 aa).

It belongs to the UPF0045 family.

The chain is UPF0045 protein YqgV (yqgV) from Bacillus subtilis (strain 168).